The sequence spans 145 residues: Protein BUD31 homolog 2 (145 aa).

This sequence belongs to the BUD31 (G10) family.

The protein localises to the nucleus. This chain is Protein BUD31 homolog 2, found in Oryza sativa subsp. japonica (Rice).